The sequence spans 227 residues: N-acetyltransferase 8 (227 aa).

Topologically, residues 1-42 are cytoplasmic; the sequence is MAPCHIRKYQESDRQWVVGLLSRGMAEHAPATFRQLLKLPRT. A helical; Signal-anchor for type II membrane protein membrane pass occupies residues 43–63; sequence LILLLGGPLALLLVSGSWLLA. Residues 61–220 form the N-acetyltransferase domain; it reads LLALVFSISL…HTVHFIYHLP (160 aa). Residues 64-227 lie on the Lumenal side of the membrane; that stretch reads LVFSISLFPA…HLPSSKVGSL (164 aa).

This sequence belongs to the NAT8 family. Preferentially expressed in liver and kidney. Also detected in brain (at protein level).

The protein localises to the endoplasmic reticulum-Golgi intermediate compartment membrane. It is found in the endoplasmic reticulum membrane. It carries out the reaction L-lysyl-[protein] + acetyl-CoA = N(6)-acetyl-L-lysyl-[protein] + CoA + H(+). The enzyme catalyses an S-substituted L-cysteine + acetyl-CoA = an N-acetyl-L-cysteine-S-conjugate + CoA + H(+). It participates in sulfur metabolism; glutathione metabolism. Functionally, endoplasmic reticulum (ER)-membrane-bound lysine N-acetyltransferase catalyzing the N6-acetylation of lysine residues in the lumen of the ER in various proteins, including PROM1 and BACE1, using acetyl-CoA as acetyl donor. Thereby, may regulate apoptosis through the acetylation and the regulation of the expression of PROM1. May also regulate amyloid beta-peptide secretion through acetylation of BACE1 and the regulation of its expression in neurons. N(6)-lysine acetylation in the ER maintains protein homeostasis and regulates reticulophagy. Alternatively, acetylates the free alpha-amino group of cysteine S-conjugates to form mercapturic acids. This is the final step in a major route for detoxification of a wide variety of reactive electrophiles which starts with their incorporation into glutathione S-conjugates. The glutathione S-conjugates are then further processed into cysteine S-conjugates and finally mercapturic acids which are water soluble and can be readily excreted in urine or bile. The protein is N-acetyltransferase 8 of Homo sapiens (Human).